The chain runs to 88 residues: Small ribosomal subunit protein uS15c (88 aa).

Belongs to the universal ribosomal protein uS15 family. In terms of assembly, part of the 30S ribosomal subunit.

The protein resides in the plastid. Its subcellular location is the chloroplast. The polypeptide is Small ribosomal subunit protein uS15c (rps15) (Aethionema cordifolium (Lebanon stonecress)).